Here is a 72-residue protein sequence, read N- to C-terminus: Large ribosomal subunit protein uL29 (72 aa).

It belongs to the universal ribosomal protein uL29 family.

The polypeptide is Large ribosomal subunit protein uL29 (Chlamydia abortus (strain DSM 27085 / S26/3) (Chlamydophila abortus)).